Consider the following 427-residue polypeptide: Inward rectifier potassium channel 2 (427 aa).

Residues 1 to 81 (MGSVRTNRYS…IFTTCVDIRW (81 aa)) are Cytoplasmic-facing. C76 bears the S-nitrosocysteine mark. A helical membrane pass occupies residues 82-106 (RWMLVIFCLAFVLSWLFFGCVFWLI). The Extracellular portion of the chain corresponds to 107–128 (ALLHGDLDASKEGKACVSEVNS). Positions 129-140 (FTAAFLFSIETQ) form an intramembrane region, helical; Pore-forming. The segment at residues 141–147 (TTIGYGF) is an intramembrane region (pore-forming). The Selectivity filter signature appears at 142–147 (TIGYGF). At 148–156 (RCVTDECPI) the chain is on the extracellular side. The helical transmembrane segment at 157 to 178 (AVFMVVFQSIVGCIIDAFIIGA) threads the bilayer. The Cytoplasmic portion of the chain corresponds to 179-427 (VMAKMAKPKK…PRPLRRESEI (249 aa)). Residues 181–208 (AKMAKPKKRNETLVFSHNAVIAMRDGKL) are polyphosphoinositide (PIP2)-binding. The segment at 384–427 (SKEEDDSENGVPESTSTDTPPDIDLHNQASVPLEPRPLRRESEI) is disordered. The PDZ-binding motif lies at 425-427 (SEI).

It belongs to the inward rectifier-type potassium channel (TC 1.A.2.1) family. KCNJ2 subfamily. As to quaternary structure, homotetramer. Homomultimeric and heteromultimeric association with KCNJ4/Kir2.3. Can form heteromeric channels with Kir2.6/KCNJ18. Associates, via its PDZ-recognition domain, with a complex containing LIN7A, LIN7B, LIN7C, DLG1, CASK and APBA1. S-nitrosylation increases the open probability and inward rectifying currents.

Its subcellular location is the cell membrane. The protein resides in the sarcolemma. The protein localises to the T-tubule. The enzyme catalyses K(+)(in) = K(+)(out). Its activity is regulated as follows. Activated by phosphatidylinositol 4,5 biphosphate (PtdIns(4,5)P2). Its function is as follows. Inward rectifier potassium channels are characterized by a greater tendency to allow potassium to flow into the cell rather than out of it. Their voltage dependence is regulated by the concentration of extracellular potassium; as external potassium is raised, the voltage range of the channel opening shifts to more positive voltages. The inward rectification is mainly due to the blockage of outward current by internal magnesium. Can be blocked by extracellular barium or cesium. Probably participates in establishing action potential waveform and excitability of neuronal and muscle tissues. This is Inward rectifier potassium channel 2 (KCNJ2) from Macaca mulatta (Rhesus macaque).